Consider the following 328-residue polypeptide: UDP-N-acetylglucosamine transporter YEA4 (328 aa).

The next 10 helical transmembrane spans lie at 1–21, 30–50, 66–86, 98–118, 122–142, 166–186, 198–218, 241–261, 274–294, and 298–318; these read MSFV…VISF, INLG…IQLP, HIPL…SVAN, IHII…WAVC, YSKL…VASL, SMFG…LSLL, WKET…LGYT, LPIA…FICI, LTLS…SVYI, and VLSV…GLYS.

It belongs to the nucleotide-sugar transporter family. SLC35A subfamily.

It localises to the golgi apparatus membrane. Sugar transporter that specifically mediates the transport of UDP-N-acetylglucosamine (UDP-GlcNAc) from the cytosol into Golgi vesicles where glycosyltransferases function. This Kluyveromyces lactis (strain ATCC 8585 / CBS 2359 / DSM 70799 / NBRC 1267 / NRRL Y-1140 / WM37) (Yeast) protein is UDP-N-acetylglucosamine transporter YEA4 (YEA4).